Consider the following 225-residue polypeptide: Nuclear protein UL4 homolog (225 aa).

It belongs to the alphaherpesvirinae HHV-1 UL4 family.

Its subcellular location is the host nucleus. The polypeptide is Nuclear protein UL4 homolog (Equus caballus (Horse)).